Reading from the N-terminus, the 833-residue chain is CUB domain-containing protein 1 (833 aa).

An N-terminal signal peptide occupies residues 1-29; that stretch reads MAHSACGFSVALLGALLLGTARLLRGTEA. Residues 30-666 lie on the Extracellular side of the membrane; sequence SEIALPQRSG…VTLTPRTVDL (637 aa). Asn-122, Asn-180, Asn-205, Asn-270, Asn-310, Asn-342, and Asn-386 each carry an N-linked (GlcNAc...) asparagine glycan. The CUB domain occupies 417-540; it reads CLDHRYCYRQ…QGLIVSYTPY (124 aa). A disulfide bridge links Cys-476 with Cys-499. The helical transmembrane segment at 667–687 threads the bilayer; that stretch reads AVVIGAAGGGALLLFALVLII. Residues 688-833 are Cytoplasmic-facing; that stretch reads CFVKKKKKVD…HTQGPVETEE (146 aa). Tyr-731 is subject to Phosphotyrosine. The disordered stretch occupies residues 783 to 833; it reads AKFTAEELAPSSPPESESEPYTFSHPNKGEIGVRETDIPLLHTQGPVETEE. A compositionally biased stretch (basic and acidic residues) spans 809–819; that stretch reads NKGEIGVRETD.

In terms of assembly, interacts with CDH2/N-cadherin, CDH3/P-cadherin, SDC1/syndecan-1, SDC4/syndecan-4 and the serine protease ST14/MT-SP1. Also interacts SRC and PRKCG/protein kinase C gamma. Post-translationally, phosphorylated on tyrosine by kinases of the SRC family such as SRC and YES as well as by the protein kinase C gamma/PRKCG. Dephosphorylated by phosphotyrosine phosphatases. Also phosphorylated by suramin, a heparin analog. Tyrosine phosphorylated in response to dissociation of integrin alpha-6 beta-4 from laminin-5. In terms of processing, N-glycosylated. A soluble form may also be produced by proteolytic cleavage at the cell surface (shedding). Another peptide of 80 kDa (p80) is present in cultured keratinocytes probably due to tryptic cleavage at an unidentified site on the N-terminal side. Converted to p80 by plasmin, a trypsin-like protease.

Its subcellular location is the cell membrane. May be involved in cell adhesion and cell matrix association. May play a role in the regulation of anchorage versus migration or proliferation versus differentiation via its phosphorylation. May be a novel marker for leukemia diagnosis and for immature hematopoietic stem cell subsets. Belongs to the tetraspanin web involved in tumor progression and metastasis. In Mus musculus (Mouse), this protein is CUB domain-containing protein 1 (Cdcp1).